A 383-amino-acid polypeptide reads, in one-letter code: MSTNCFSGYKDLIKEGDLTLIWVSRDNIKPVRMHSEEVFNTRYGSFPHKDIIGKPYGSQIAIRTKGSNKFAFVHVLQPTPELWTLSLPHRTQIVYTPDSSYIMQRLNCSPHSRVIEAGTGSGSFSHAFARSVGHLFSFEFHHIRYEQALEEFKEHGLIDDNVTITHRDVCQGGFLIKKGDTTSYEFGNNETAASLNANVVFLDLPAPWDAIPHLDSVISVDEKVGLCCFSPCIEQVDKTLDVLEKYGWTDVEMVEIQGRQYESRRQMVRSLNDALERLRDIKRHKLQGVERRKRMFNNTIDSNDEKVGKRNEDGVPLTEKAKFNPFGKGSRIKEGDSNYKWKEVTKMEAEIKSHTSYLTFAFKVVNRSRDDEKVNEILRSTEK.

Residues V94, 121-124, E139, R144, 168-169, and D203 each bind S-adenosyl-L-methionine; these read SGSF and DV. S302 bears the Phosphoserine mark.

The protein belongs to the class I-like SAM-binding methyltransferase superfamily. TRM61 family. Heterotetramer; composed of two copies of TRM6/GCD10 and two copies of TRM61/GCD14.

Its subcellular location is the nucleus. It catalyses the reaction adenosine(58) in tRNA + S-adenosyl-L-methionine = N(1)-methyladenosine(58) in tRNA + S-adenosyl-L-homocysteine + H(+). In terms of biological role, catalytic subunit of tRNA (adenine-N(1)-)-methyltransferase, which catalyzes the formation of N(1)-methyladenine at position 58 (m1A58) in initiator methionyl-tRNA. GCD14 is also required for repression of GCN4 mRNA translation by the upstream open reading frames (uORFs) under conditions of amino acid sufficiency. The sequence is that of tRNA (adenine(58)-N(1))-methyltransferase catalytic subunit TRM61 (GCD14) from Saccharomyces cerevisiae (strain ATCC 204508 / S288c) (Baker's yeast).